The following is a 273-amino-acid chain: Large ribosomal subunit protein uL2cz/uL2cy (273 aa).

Disordered stretches follow at residues 1 to 20 (MAIH…AVDS) and 224 to 254 (NPVD…PALG).

This sequence belongs to the universal ribosomal protein uL2 family. In terms of assembly, part of the 50S ribosomal subunit.

It is found in the plastid. The protein localises to the chloroplast. In Nuphar advena (Common spatterdock), this protein is Large ribosomal subunit protein uL2cz/uL2cy (rpl2-A).